A 317-amino-acid chain; its full sequence is Transcription factor elt-3 (317 aa).

A disordered region spans residues 1–34 (METANYYLPSPPYSSTSSSDSRESRMNTPIPTTY). The GATA-type zinc finger occupies 244 to 268 (CSNCKTRETTLWRRNGEGGVECNAC). The segment at 290-317 (KRNRRPRNESPNSAIRNTHQRHGHAAAC) is disordered. Residues 307–317 (THQRHGHAAAC) are compositionally biased toward basic residues.

In terms of assembly, interacts with skn-1; interaction may enhance transcriptional activation of target genes. In terms of tissue distribution, expressed in head, trunk and tail. Expression decreases with age in the hypodermal cells and the pharyngeal-intestinal valve cells in the head, eventually showing little or no expression in about 14 day old worms. Expressed in hypodermal, but not in intestinal, cells at 1 day of age. Expression in the hypodermal and intestinal cells in the trunk region decreases quickly between day 3 and day 5 of adulthood. Expression in the tail between days 3 and 14 stays approximately uniform.

It is found in the nucleus. Functionally, transcription factor. Required, in concert with signal transducer and transcription factor sta-2, for up-regulation of the vacuolar H(+)-ATPase and acceleration of lysosome maturation at molt. Involved in regulating hypodermal development, perhaps acting downstream of transcription factor elt-1. Modulates environmentally induced changes in collagen gene expression, including rol-6, sqt-1, lon-3, and dpy-13. Involved in regulating expression of various genes, including gst-4, sod-3, ugt-9, and col-144. In response to oxidative stress, required to up-regulate expression of gst-4 mRNA. Regulated by the Insulin/IGF-1-like signaling (IIS) mediated pathway. Plays a role in longevity. May regulate the expression of genes that control sensitivity to osmotic stress, in conjunction with the GATA region-binding transcription factor elt-2. May form a transcriptional circuit with GATA factors egl-18 and elt-6. This Caenorhabditis elegans protein is Transcription factor elt-3.